An 81-amino-acid polypeptide reads, in one-letter code: Delta-conotoxin PVIA (81 aa).

Residues 1-22 (MKLTCVMIVAVLFLTAWTFVTA) form the signal peptide. Positions 23–49 (DDSKNGLENHFWKARDEMKNREASKLD) are excised as a propeptide. 3 disulfides stabilise this stretch: Cys54-Cys69, Cys61-Cys73, and Cys68-Cys78. Residues Pro57 and Pro65 each carry the 4-hydroxyproline modification. Glycine amide; in form delta-conotoxin PVIA is present on Gly80.

The difference between delta-conotoxin PVIA and [deamido]-delta-conotoxin PVIA lies in the state of amidation of Gly-80. As to expression, expressed by the venom duct.

It is found in the secreted. In terms of biological role, delta-conotoxins bind to site 6 of voltage-gated sodium channels (Nav) and inhibit the inactivation process. This toxin shows weak effects on rNav1.2/SCN2A (EC(50)=2.9 uM), rNav1.4/SCN4A (EC(50)=5.2 uM), hNav1.7/SCN9A (EC(50)=1.9 uM) and rNav1.7/SCN9A (EC(50)=6.4 uM). In vivo, this toxin shows different effects. In mice, injection of this toxin causes hyperactivity, rapid running, limb extension, and death. In fish, the peptide elicites spurts of rapid swimming, with twisted motions, quivering fins and the lockjaw extended mouth syndrome. Rigid paralysis and death are observed at higher doses. In mollusks, this peptide is inactive. Injection of this peptide together with the kappa-conotoxin PVIIA causes the sudden tetanus of prey (STOP) syndrome, which is a single, lethal 'fin-pop' in envenomed fish. The polypeptide is Delta-conotoxin PVIA (Conus purpurascens (Purple cone)).